We begin with the raw amino-acid sequence, 338 residues long: Lipoate-protein ligase A (338 aa).

A BPL/LPL catalytic domain is found at 29 to 216 (DPNQRVLFLW…AFFAHYGARV (188 aa)). ATP contacts are provided by residues Arg-71, 76–79 (GAVF), and Lys-134. Residue Lys-134 participates in (R)-lipoate binding.

The protein belongs to the LplA family. As to quaternary structure, monomer.

Its subcellular location is the cytoplasm. The catalysed reaction is L-lysyl-[lipoyl-carrier protein] + (R)-lipoate + ATP = N(6)-[(R)-lipoyl]-L-lysyl-[lipoyl-carrier protein] + AMP + diphosphate + H(+). It participates in protein modification; protein lipoylation via exogenous pathway; protein N(6)-(lipoyl)lysine from lipoate: step 1/2. Its pathway is protein modification; protein lipoylation via exogenous pathway; protein N(6)-(lipoyl)lysine from lipoate: step 2/2. Its function is as follows. Catalyzes both the ATP-dependent activation of exogenously supplied lipoate to lipoyl-AMP and the transfer of the activated lipoyl onto the lipoyl domains of lipoate-dependent enzymes. The sequence is that of Lipoate-protein ligase A from Aeromonas salmonicida (strain A449).